Reading from the N-terminus, the 195-residue chain is MTKTIDFYFDFISPFSYLAQVKLPDLARRTGCVIEYRPIDIPEAKIAAGNYGPSNREVVPKIKVMMADLERWAAKYEVPLTFPASFACSDWNCAALYARGQDQAEAFVTAAYHRIWGIGIDPRDQNELRGCAEDVGLDADALCEFVRSPAGQGEYRKARTQAYQRGVFGAPMMFVDDQIFWGNDRLDFLESYLLD.

S13 acts as the Nucleophile in catalysis. S13 lines the glutathione pocket. Substrate is bound by residues K45 and 55 to 56 (NR). 181-184 (WGND) serves as a coordination point for glutathione.

This sequence belongs to the GST superfamily. NadH family. It depends on glutathione as a cofactor.

It catalyses the reaction 2-hydroxychromene-2-carboxylate = (3E)-4-(2-hydroxyphenyl)-2-oxobut-3-enoate. Activated by salicylate. Functionally, involved in the naphthalene and naphthalenesulfonate catabolic pathway. Catalyzes the reversible glutathione-dependent isomerization of 2-hydroxychromene-2-carboxylate (HCCA) to trans-O-hydroxybenzylidenepyruvate (THBPA). It can also use 2-hydroxybenzo[g]chromene-2-carboxylate as substrate. This chain is 2-hydroxychromene-2-carboxylate isomerase (nsaD), found in Sphingobium xenophagum.